The sequence spans 333 residues: Phosphate acyltransferase (333 aa).

It belongs to the PlsX family. In terms of assembly, homodimer. Probably interacts with PlsY.

The protein localises to the cytoplasm. The enzyme catalyses a fatty acyl-[ACP] + phosphate = an acyl phosphate + holo-[ACP]. The protein operates within lipid metabolism; phospholipid metabolism. Catalyzes the reversible formation of acyl-phosphate (acyl-PO(4)) from acyl-[acyl-carrier-protein] (acyl-ACP). This enzyme utilizes acyl-ACP as fatty acyl donor, but not acyl-CoA. This is Phosphate acyltransferase from Enterococcus faecalis (strain ATCC 700802 / V583).